A 124-amino-acid polypeptide reads, in one-letter code: MAKTKTEKKAKSAINEVVTRECTINLNRRLHKVGYKKRAPRAVKIVRKFAEKEMGTNDVRIDTRLNKALWHRGIRNPPFRIRVRLSRRRNDDEDSPNKLYTLVTYVPVSTFKELQTENVESTED.

It belongs to the eukaryotic ribosomal protein eL31 family.

This is Large ribosomal subunit protein eL31 (RpL31) from Aedes aegypti (Yellowfever mosquito).